The following is a 262-amino-acid chain: Abhydrolase domain-containing protein ACTT2-1 (262 aa).

A Peroxisomal targeting signal type 1 motif is present at residues 260–262 (SKL).

It belongs to the AB hydrolase superfamily. AKT2 hydrolase family.

It is found in the peroxisome. It participates in mycotoxin biosynthesis. Its function is as follows. Abhydrolase domain-containing protein; part of the gene clusters that mediate the biosynthesis of the host-selective toxins (HSTs) ACT-toxins responsible for brown spot of tangerine disease by the tangerine pathotype which affects tangerines and mandarins. ACT-toxins consist of three moieties, 9,10-epoxy-8-hydroxy-9-methyl-decatrienoic acid (EDA), valine and a polyketide. ACT-toxin I is toxic to both citrus and pear; toxin II the 5''-deoxy derivative of ACT-toxin I, is highly toxic to pear and slightly toxic to citrus. On cellular level, ACT-toxins affect plasma membrane of susceptible cells and cause a sudden increase in loss of K(+) after a few minutes of toxin treatment. The acyl-CoA ligase ACTT1, the hydrolase ACTT2, the enoyl-CoA hydratases ACTT3 and ACTT6, and the acyl-CoA synthetase ACTT5 are all involved in the biosynthesis of the AK-, AF- and ACT-toxin common 9,10-epoxy-8-hydroxy-9-methyl-decatrienoic acid (EDA) structural moiety. The exact role of each enzyme, and of additional enzymes identified within the AF-toxin clusters have still to be determined. On the other hand, ACTTS1 to ACTTS4 are specific to the tangerine pathotype. The function of ACTTS3 is to elongate the polyketide chain portion of ACT-toxin that is unique to this toxin. The enoyl-reductase ACTTS2 might complement the missing enoyl-reductase (ER) domain in ACTTS3 in the synthesis of the polyketide portion of ACT-toxin. The roles of the nonribosomal peptide synthetases-related proteins ACTTS1 and ACTTS4 have also still not been elucidated. This chain is Abhydrolase domain-containing protein ACTT2-1, found in Alternaria alternata (Alternaria rot fungus).